Reading from the N-terminus, the 532-residue chain is Flavin-containing monooxygenase 1 (532 aa).

An N-acetylalanine modification is found at Ala-2. Topologically, residues 2–510 (AKRVAIVGAG…ARVVQESPSP (509 aa)) are lumenal. Residues 9 to 13 (GAGVS), Glu-32, 40 to 41 (LW), and 61 to 62 (NS) each bind FAD. NADP(+) is bound by residues 60 to 61 (SN) and 195 to 198 (SGTD). Residues 511–531 (FESFLKVFSFLALLVAIFLIF) form a helical membrane-spanning segment. Leu-532 is a topological domain (cytoplasmic).

Belongs to the FMO family. The cofactor is FAD. In terms of tissue distribution, expressed mainly in fetal and adult liver.

Its subcellular location is the endoplasmic reticulum membrane. It carries out the reaction hypotaurine + NADPH + O2 + H(+) = taurine + NADP(+) + H2O. It catalyses the reaction hypotaurine + NADH + O2 + H(+) = taurine + NAD(+) + H2O. The catalysed reaction is trimethylamine + NADPH + O2 = trimethylamine N-oxide + NADP(+) + H2O. The enzyme catalyses N,N-dimethylaniline + NADPH + O2 + H(+) = N,N-dimethylaniline N-oxide + NADP(+) + H2O. In terms of biological role, broad spectrum monooxygenase that catalyzes the oxygenation of a wide variety of nitrogen- and sulfur-containing compounds including xenobiotics. Catalyzes the S-oxygenation of hypotaurine to produce taurine, an organic osmolyte involved in cell volume regulation as well as a variety of cytoprotective and developmental processes. In vitro, catalyzes the N-oxygenation of trimethylamine (TMA) to produce trimethylamine N-oxide (TMAO) and could therefore participate to the detoxification of this compound that is generated by the action of gut microbiota from dietary precursors such as choline, choline containing compounds, betaine or L-carnitine. The polypeptide is Flavin-containing monooxygenase 1 (Homo sapiens (Human)).